The chain runs to 395 residues: Selection and upkeep of intraepithelial T-cells protein 7 (395 aa).

The signal sequence occupies residues 1–25; the sequence is MMKPEFFCFSGFCVYFLFLQVVVSS. An Ig-like V-type domain is found at 26-141; the sequence is EKLRVTTPTR…DAAIMNLNVT (116 aa). Over 26-248 the chain is Extracellular; it reads EKLRVTTPTR…FNRDRIWMES (223 aa). A disulfide bridge links Cys49 with Cys123. 2 N-linked (GlcNAc...) asparagine glycosylation sites follow: Asn92 and Asn139. The region spanning 142 to 233 is the Ig-like C1-type domain; it reads AVGLETEIHV…TGEEKQTSII (92 aa). Residues Cys163 and Cys217 are joined by a disulfide bond. Residues 249–269 form a helical membrane-spanning segment; it reads LASIVWIMLSVYILYIICFYW. Topologically, residues 270 to 287 are cytoplasmic; the sequence is RTGCASGCLSKCFCVVTS. The helical transmembrane segment at 288-308 threads the bilayer; sequence WPVQIVHLLFCTGTFFAIYLP. Over 309-329 the chain is Extracellular; it reads HRSRVSLSDPQFPLYNNWITE. Residues 330–350 form a helical membrane-spanning segment; that stretch reads LLFVILFLTICFALPIILLFI. The Cytoplasmic segment spans residues 351 to 395; that stretch reads QFQFTSLTKWEKNKDGIMDQPRLGKAHETSSLYRKKTGKSWEQEK. Residues 371–395 are disordered; sequence PRLGKAHETSSLYRKKTGKSWEQEK.

Belongs to the SKINT family. As to expression, expressed in skin, thymus, testis and, to a lower extent, bladder.

It localises to the membrane. May act by engaging a cell surface molecule on immature T-cells in the embryonic thymus. The chain is Selection and upkeep of intraepithelial T-cells protein 7 (Skint7) from Mus musculus (Mouse).